A 317-amino-acid chain; its full sequence is Bile salt hydrolase/transferase (317 aa).

Residue cysteine 2 is the Nucleophile; acyl-thioester intermediate of the active site. Residues cysteine 2 and arginine 18 each coordinate deoxycholate. Asparagine 82 is a taurine binding site.

The protein belongs to the peptidase C59 family. Homotetramer. The tetramer consists of a dimer of dimers.

The enzyme catalyses glycocholate + H2O = cholate + glycine. The catalysed reaction is glycodeoxycholate + H2O = deoxycholate + glycine. It catalyses the reaction chenodeoxycholate + glycine = glycochenodeoxycholate + H2O. It carries out the reaction cholate + taurine = taurocholate + H2O. The enzyme catalyses taurodeoxycholate + H2O = deoxycholate + taurine. The catalysed reaction is taurochenodeoxycholate + H2O = chenodeoxycholate + taurine. It catalyses the reaction an L-alpha-amino acid + cholate = an N-choloyl-L-alpha-amino acid + H2O. It carries out the reaction an L-alpha-amino acid + taurocholate = an N-choloyl-L-alpha-amino acid + taurine. The enzyme catalyses cholate + L-alanine = L-alanocholate + H2O. The catalysed reaction is taurocholate + L-alanine = L-alanocholate + taurine. It catalyses the reaction cholate + L-serine = L-serocholate + H2O. It carries out the reaction taurocholate + L-serine = L-serocholate + taurine. The enzyme catalyses cholate + L-histidine = L-histidocholate + H2O. The catalysed reaction is taurocholate + L-histidine = L-histidocholate + taurine. It functions in the pathway lipid metabolism; bile acid biosynthesis. With respect to regulation, hydrolase activity is competitively inhibited by the products cholate (CA) and deoxycholate (DCA), and by phenylacetate and 4-aminophenylacetate. Penicillin V and penicillin G show mixed inhibition. Strongly inhibited by thiol enzyme inhibitors in vitro. Possesses dual functions in bile acid metabolism. Acts as a bile salt hydrolase that catalyzes the deconjugation of glycine- and taurine-linked bile salts, which occurs naturally in the intestines of humans, releasing amino acid residues and deconjugated bile salts (bile acids). Can hydrolyze the amide bond in all six major human conjugated bile salts, namely glycocholate (GCA), glycodeoxycholate (GDCA), glycochenodeoxycholate (GCDCA), taurocholate (TCA), taurodeoxycholate (TDCA) and taurochenodeoxycholate (TCDCA). Shows a slight preference for glycine-conjugated bile acids as substrates. Also acts as an amine N-acyltransferase that conjugates a wide variety of amino acids to conjugated and non-conjugated bile acids, thus producing bacterial bile acid amidates (BBAAs) - also named microbially conjugated bile acids (MCBAs) - in the gastrointestinal tract. These BBAAs may facilitate communication between the microbiota and host through the activation of human ligand-activated transcription factors. Is totally inactive toward penicillin V. The sequence is that of Bile salt hydrolase/transferase from Bifidobacterium longum.